The following is a 172-amino-acid chain: Shikimate kinase (172 aa).

ATP is bound at residue 14–19 (GAGKST). Position 18 (serine 18) interacts with Mg(2+). The substrate site is built by aspartate 36, arginine 60, and glycine 82. Arginine 120 contacts ATP. Arginine 140 contacts substrate.

This sequence belongs to the shikimate kinase family. As to quaternary structure, monomer. It depends on Mg(2+) as a cofactor.

It localises to the cytoplasm. It catalyses the reaction shikimate + ATP = 3-phosphoshikimate + ADP + H(+). The protein operates within metabolic intermediate biosynthesis; chorismate biosynthesis; chorismate from D-erythrose 4-phosphate and phosphoenolpyruvate: step 5/7. In terms of biological role, catalyzes the specific phosphorylation of the 3-hydroxyl group of shikimic acid using ATP as a cosubstrate. This is Shikimate kinase from Tolumonas auensis (strain DSM 9187 / NBRC 110442 / TA 4).